We begin with the raw amino-acid sequence, 192 residues long: Peroxiredoxin tpx1 (192 aa).

Residues 3–161 (LQIGKPAPDF…ALRLLDAFQF (159 aa)) form the Thioredoxin domain. Cys-48 acts as the Cysteine sulfenic acid (-SOH) intermediate in catalysis. Phosphoserine is present on residues Ser-105 and Ser-148.

It belongs to the peroxiredoxin family. AhpC/Prx1 subfamily. As to quaternary structure, homodimer; disulfide-linked, upon oxidation. Interacts with srx1 in response to oxidative stress. Interacts with pap1 via transient disulfide linkages. The enzyme can be inactivated by further oxidation of the cysteine sulfenic acid (C(P)-SOH) to sulphinic acid (C(P)-SO2H) instead of its condensation to a disulfide bond. It can be reactivated by forming a transient disulfide bond with sulfiredoxin srx1, which reduces the cysteine sulfinic acid in an ATP- and Mg-dependent manner.

Its subcellular location is the cytoplasm. The protein localises to the nucleus. The enzyme catalyses a hydroperoxide + [thioredoxin]-dithiol = an alcohol + [thioredoxin]-disulfide + H2O. In terms of biological role, thiol-specific peroxidase that catalyzes the reduction of hydrogen peroxide and organic hydroperoxides to water and alcohols, respectively. Plays a role in cell protection against oxidative stress by detoxifying peroxides and as sensor of hydrogen peroxide-mediated signaling events. Relays hydrogen peroxide as a signal to the transcription factor pap1 by inducing the formation of intramolecular disulfide bonds in pap1, which causes its nuclear accumulation and activation. Reduced by srx1 and this regulation acts as a molecular switch controlling the transcriptional response to hydrogen peroxide. This chain is Peroxiredoxin tpx1 (tpx1), found in Schizosaccharomyces pombe (strain 972 / ATCC 24843) (Fission yeast).